Consider the following 478-residue polypeptide: Proline--tRNA ligase (478 aa).

It belongs to the class-II aminoacyl-tRNA synthetase family. ProS type 3 subfamily. In terms of assembly, homodimer.

Its subcellular location is the cytoplasm. It catalyses the reaction tRNA(Pro) + L-proline + ATP = L-prolyl-tRNA(Pro) + AMP + diphosphate. Its function is as follows. Catalyzes the attachment of proline to tRNA(Pro) in a two-step reaction: proline is first activated by ATP to form Pro-AMP and then transferred to the acceptor end of tRNA(Pro). In Clostridium botulinum (strain Langeland / NCTC 10281 / Type F), this protein is Proline--tRNA ligase.